A 308-amino-acid chain; its full sequence is Oligopeptide transport system permease protein AmiD (308 aa).

A run of 6 helical transmembrane segments spans residues 43-63 (TVVM…YPMF), 111-131 (ILIS…VGGI), 145-167 (VYNV…SIGA), 171-193 (NLIF…VQIL), 234-254 (MLPS…GLPI), and 274-294 (AYLF…LFVV). One can recognise an ABC transmembrane type-1 domain in the interval 107–295 (ARNSILISVI…LVSLSLFVVG (189 aa)).

Belongs to the binding-protein-dependent transport system permease family. OppBC subfamily.

The protein resides in the cell membrane. Its function is as follows. Part of the binding-protein-dependent transport system for oligopeptides; probably responsible for the translocation of the substrate across the membrane. The sequence is that of Oligopeptide transport system permease protein AmiD (amiD) from Streptococcus pneumoniae (strain ATCC BAA-255 / R6).